Reading from the N-terminus, the 1584-residue chain is Pentafunctional AROM polypeptide (1584 aa).

Residues 1–384 (MSQDTDVVSV…YEKHATVVSD (384 aa)) form a 3-dehydroquinate synthase region. Residues 46 to 48 (DTN), 83 to 86 (ETSK), 114 to 116 (GGV), and Asp-119 contribute to the NAD(+) site. Residue Arg-130 participates in 7-phospho-2-dehydro-3-deoxy-D-arabino-heptonate binding. 139–140 (TT) lines the NAD(+) pocket. 7-phospho-2-dehydro-3-deoxy-D-arabino-heptonate-binding residues include Asp-146 and Lys-152. Lys-161 is a binding site for NAD(+). Asn-162 lines the 7-phospho-2-dehydro-3-deoxy-D-arabino-heptonate pocket. Residues 179 to 182 (FLET) and Asn-190 each bind NAD(+). Glu-194 is a binding site for Zn(2+). 7-phospho-2-dehydro-3-deoxy-D-arabino-heptonate-binding positions include 194–197 (EVIK) and Lys-250. Glu-260 serves as the catalytic Proton acceptor; for 3-dehydroquinate synthase activity. Residues 264–268 (RNLLN) and His-271 contribute to the 7-phospho-2-dehydro-3-deoxy-D-arabino-heptonate site. A Zn(2+)-binding site is contributed by His-271. Catalysis depends on His-275, which acts as the Proton acceptor; for 3-dehydroquinate synthase activity. Positions 287 and 356 each coordinate 7-phospho-2-dehydro-3-deoxy-D-arabino-heptonate. Zn(2+) is bound at residue His-287. The EPSP synthase stretch occupies residues 397-843 (VSPFDNSVSD…WDVLRNSFKI (447 aa)). Cys-825 acts as the For EPSP synthase activity in catalysis. The interval 863–1058 (RASVILIGMR…IQKPHSFFLS (196 aa)) is shikimate kinase. Residue 870 to 877 (GMRGAGKT) participates in ATP binding. Positions 1059 to 1280 (LTFPNINDAI…AAPGQLSVRQ (222 aa)) are 3-dehydroquinase. The Proton acceptor; for 3-dehydroquinate dehydratase activity role is filled by His-1182. The Schiff-base intermediate with substrate; for 3-dehydroquinate dehydratase activity role is filled by Lys-1211. Residues 1293–1584 (PKKFYLFGTP…YMVLCAKEHN (292 aa)) are shikimate dehydrogenase.

In the N-terminal section; belongs to the sugar phosphate cyclases superfamily. Dehydroquinate synthase family. It in the 2nd section; belongs to the EPSP synthase family. The protein in the 3rd section; belongs to the shikimate kinase family. This sequence in the 4th section; belongs to the type-I 3-dehydroquinase family. In the C-terminal section; belongs to the shikimate dehydrogenase family. Homodimer. Zn(2+) is required as a cofactor.

It is found in the cytoplasm. It carries out the reaction 7-phospho-2-dehydro-3-deoxy-D-arabino-heptonate = 3-dehydroquinate + phosphate. The enzyme catalyses 3-dehydroquinate = 3-dehydroshikimate + H2O. The catalysed reaction is shikimate + NADP(+) = 3-dehydroshikimate + NADPH + H(+). It catalyses the reaction shikimate + ATP = 3-phosphoshikimate + ADP + H(+). It carries out the reaction 3-phosphoshikimate + phosphoenolpyruvate = 5-O-(1-carboxyvinyl)-3-phosphoshikimate + phosphate. Its pathway is metabolic intermediate biosynthesis; chorismate biosynthesis; chorismate from D-erythrose 4-phosphate and phosphoenolpyruvate: step 2/7. It functions in the pathway metabolic intermediate biosynthesis; chorismate biosynthesis; chorismate from D-erythrose 4-phosphate and phosphoenolpyruvate: step 3/7. The protein operates within metabolic intermediate biosynthesis; chorismate biosynthesis; chorismate from D-erythrose 4-phosphate and phosphoenolpyruvate: step 4/7. It participates in metabolic intermediate biosynthesis; chorismate biosynthesis; chorismate from D-erythrose 4-phosphate and phosphoenolpyruvate: step 5/7. Its pathway is metabolic intermediate biosynthesis; chorismate biosynthesis; chorismate from D-erythrose 4-phosphate and phosphoenolpyruvate: step 6/7. In terms of biological role, the AROM polypeptide catalyzes 5 consecutive enzymatic reactions in prechorismate polyaromatic amino acid biosynthesis. This chain is Pentafunctional AROM polypeptide, found in Schizosaccharomyces japonicus (strain yFS275 / FY16936) (Fission yeast).